The primary structure comprises 179 residues: Large ribosomal subunit protein uL5 (179 aa).

It belongs to the universal ribosomal protein uL5 family. In terms of assembly, part of the 50S ribosomal subunit; part of the 5S rRNA/L5/L18/L25 subcomplex. Contacts the 5S rRNA and the P site tRNA. Forms a bridge to the 30S subunit in the 70S ribosome.

Functionally, this is one of the proteins that bind and probably mediate the attachment of the 5S RNA into the large ribosomal subunit, where it forms part of the central protuberance. In the 70S ribosome it contacts protein S13 of the 30S subunit (bridge B1b), connecting the 2 subunits; this bridge is implicated in subunit movement. Contacts the P site tRNA; the 5S rRNA and some of its associated proteins might help stabilize positioning of ribosome-bound tRNAs. The sequence is that of Large ribosomal subunit protein uL5 from Xylella fastidiosa (strain M12).